We begin with the raw amino-acid sequence, 153 residues long: Ribosome maturation factor RimP (153 aa).

The protein belongs to the RimP family.

The protein resides in the cytoplasm. Functionally, required for maturation of 30S ribosomal subunits. The protein is Ribosome maturation factor RimP of Coxiella burnetii (strain CbuG_Q212) (Coxiella burnetii (strain Q212)).